A 73-amino-acid chain; its full sequence is Large ribosomal subunit protein bL31 (73 aa).

It belongs to the bacterial ribosomal protein bL31 family. Type A subfamily. In terms of assembly, part of the 50S ribosomal subunit.

Binds the 23S rRNA. This is Large ribosomal subunit protein bL31 (rpmE) from Jannaschia sp. (strain CCS1).